We begin with the raw amino-acid sequence, 538 residues long: Probable bifunctional riboflavin biosynthesis protein RIBA 1, chloroplastic (538 aa).

Over residues 1-16 (MSRLSSIYSQHRTSGL) the composition is skewed to polar residues. The interval 1 to 29 (MSRLSSIYSQHRTSGLRSDRSIMPNSTSN) is disordered. A chloroplast-targeting transit peptide spans 1-73 (MSRLSSIYSQ…NGQASPSKVV (73 aa)). Residues 46–311 (RNFHISHAVG…IADLIRYRRK (266 aa)) form a DHBP synthase region. D-ribulose 5-phosphate-binding positions include 134 to 135 (RE), aspartate 139, 249 to 253 (RAGHT), and glutamate 273. Glutamate 135 provides a ligand contact to Mg(2+). Residue histidine 252 coordinates Mg(2+). The GTP cyclohydrolase II stretch occupies residues 312-530 (RDRLVERVCV…DGGIKKEQDQ (219 aa)). 362 to 366 (RVHSE) lines the GTP pocket. Zn(2+)-binding residues include cysteine 367, cysteine 378, and cysteine 380. GTP-binding positions include glutamine 383, 406-408 (EGR), and threonine 428. The active-site Proton acceptor; for GTP cyclohydrolase activity is aspartate 440. The active-site Nucleophile; for GTP cyclohydrolase activity is the arginine 442. The GTP site is built by threonine 463 and lysine 468. The interval 506–538 (HVYGTRPSGNTSTLADGGIKKEQDQIDSASEQE) is disordered.

The protein in the N-terminal section; belongs to the DHBP synthase family. In the C-terminal section; belongs to the GTP cyclohydrolase II family. Requires Mg(2+) as cofactor. The cofactor is Mn(2+). Zn(2+) is required as a cofactor.

Its subcellular location is the plastid. It localises to the chloroplast. It carries out the reaction D-ribulose 5-phosphate = (2S)-2-hydroxy-3-oxobutyl phosphate + formate + H(+). The enzyme catalyses GTP + 4 H2O = 2,5-diamino-6-hydroxy-4-(5-phosphoribosylamino)-pyrimidine + formate + 2 phosphate + 3 H(+). Its pathway is cofactor biosynthesis; riboflavin biosynthesis; 2-hydroxy-3-oxobutyl phosphate from D-ribulose 5-phosphate: step 1/1. It participates in cofactor biosynthesis; riboflavin biosynthesis; 5-amino-6-(D-ribitylamino)uracil from GTP: step 1/4. Its function is as follows. Involved in riboflavin biosynthesis. Catalyzes both the conversion of D-ribulose 5-phosphate to formate and 3,4-dihydroxy-2-butanone 4-phosphate and the conversion of GTP to 2,5-diamino-6-ribosylamino-4(3H)-pyrimidinone 5'-phosphate (DARP), formate and pyrophosphate. This chain is Probable bifunctional riboflavin biosynthesis protein RIBA 1, chloroplastic (RIBA1), found in Oryza sativa subsp. japonica (Rice).